Here is a 1128-residue protein sequence, read N- to C-terminus: Transient receptor potential-gamma protein (1128 aa).

Residues 1-325 (MMEEENTIRP…MALQAVDIIR (325 aa)) are Cytoplasmic-facing. ANK repeat units follow at residues 57–86 (LGRT…DTKD) and 131–160 (PDIT…VLPM). Residues 326–346 (IGIMFPIFSLAYILAPYSSIG) traverse the membrane as a helical segment. At 347–403 (QTMRKPFIKFICHSASYFTFLFLLMLASQRIETFIGGWFFADSSGMLNTMEELPTKR) the chain is on the extracellular side. Residues 404 to 424 (GAKPTFIEWLILAWVSGLIWS) traverse the membrane as a helical segment. The Cytoplasmic portion of the chain corresponds to 425 to 444 (EVKQLWDVGLQEYLNDMWNV). Residues 445-465 (IDFVTNSLYVATVALRVVSFF) form a helical membrane-spanning segment. Over 466 to 492 (QVQKEMIYNSHATDLPRERWDAWDPML) the chain is Extracellular. The helical transmembrane segment at 493-513 (ISEGLFSAANIFSSLKLVYIF) threads the bilayer. The Cytoplasmic portion of the chain corresponds to 514–535 (SVNPHLGPLQVSLSRMVMDIMK). Residues 536–556 (FFFLYVLVLFAFGSGLNQLLW) form a helical membrane-spanning segment. Over 557 to 629 (YYADLEKKRC…GIKIFTRFWG (73 aa)) the chain is Extracellular. Residues 630 to 650 (MLMFGTYSVINIVVLLNLLIA) traverse the membrane as a helical segment. Over 651–1128 (MMNHSYQLIS…SCVSTTGAIG (478 aa)) the chain is Cytoplasmic. Disordered regions lie at residues 865–898 (RQQS…TASS) and 1064–1111 (AAEA…SVNS). Residues 878-893 (ESPTTPTAPQGTQGAA) show a composition bias toward low complexity. Residues 1085–1111 (TQSQHDSVETNSTFTLSIDPSNTSVNS) show a composition bias toward polar residues.

The protein belongs to the transient receptor (TC 1.A.4) family. STrpC subfamily. In terms of assembly, interacts preferentially with trpl and interacts to a lower extent with trp. Expressed predominantly in the rhabdomeres of photoreceptor cells.

The protein localises to the cell projection. Its subcellular location is the rhabdomere membrane. Its function is as follows. A light-sensitive calcium channel that is required for inositide-mediated Ca(2+) entry in the retina during phospholipase C (PLC)-mediated phototransduction. Forms a regulated cation channel when heteromultimerized with trpl. In Drosophila melanogaster (Fruit fly), this protein is Transient receptor potential-gamma protein (Trpgamma).